A 372-amino-acid chain; its full sequence is NAD(P)H-quinone oxidoreductase subunit 1 (372 aa).

8 helical membrane-spanning segments follow: residues methionine 27–valine 47, isoleucine 97–valine 117, valine 128–methionine 148, alanine 166–methionine 186, valine 204–leucine 224, valine 266–valine 286, threonine 308–leucine 328, and phenylalanine 347–proline 367.

This sequence belongs to the complex I subunit 1 family. As to quaternary structure, NDH-1 is composed of at least 11 different subunits.

The protein resides in the cellular thylakoid membrane. It carries out the reaction a plastoquinone + NADH + (n+1) H(+)(in) = a plastoquinol + NAD(+) + n H(+)(out). The catalysed reaction is a plastoquinone + NADPH + (n+1) H(+)(in) = a plastoquinol + NADP(+) + n H(+)(out). Its function is as follows. NDH-1 shuttles electrons from an unknown electron donor, via FMN and iron-sulfur (Fe-S) centers, to quinones in the respiratory and/or the photosynthetic chain. The immediate electron acceptor for the enzyme in this species is believed to be plastoquinone. Couples the redox reaction to proton translocation, and thus conserves the redox energy in a proton gradient. This Synechococcus sp. (strain CC9311) protein is NAD(P)H-quinone oxidoreductase subunit 1.